The primary structure comprises 142 residues: Large-conductance mechanosensitive channel (142 aa).

A run of 3 helical transmembrane segments spans residues 14-34, 38-58, and 82-102; these read VMDL…VTSV, LVMP…NYFL, and GSFI…FLLV.

It belongs to the MscL family. As to quaternary structure, homopentamer.

Its subcellular location is the cell inner membrane. In terms of biological role, channel that opens in response to stretch forces in the membrane lipid bilayer. May participate in the regulation of osmotic pressure changes within the cell. The protein is Large-conductance mechanosensitive channel of Sinorhizobium fredii (strain NBRC 101917 / NGR234).